Here is a 258-residue protein sequence, read N- to C-terminus: Imidazole glycerol phosphate synthase subunit HisF (258 aa).

Residues aspartate 11 and aspartate 130 contribute to the active site.

The protein belongs to the HisA/HisF family. In terms of assembly, heterodimer of HisH and HisF.

The protein resides in the cytoplasm. The enzyme catalyses 5-[(5-phospho-1-deoxy-D-ribulos-1-ylimino)methylamino]-1-(5-phospho-beta-D-ribosyl)imidazole-4-carboxamide + L-glutamine = D-erythro-1-(imidazol-4-yl)glycerol 3-phosphate + 5-amino-1-(5-phospho-beta-D-ribosyl)imidazole-4-carboxamide + L-glutamate + H(+). Its pathway is amino-acid biosynthesis; L-histidine biosynthesis; L-histidine from 5-phospho-alpha-D-ribose 1-diphosphate: step 5/9. In terms of biological role, IGPS catalyzes the conversion of PRFAR and glutamine to IGP, AICAR and glutamate. The HisF subunit catalyzes the cyclization activity that produces IGP and AICAR from PRFAR using the ammonia provided by the HisH subunit. The sequence is that of Imidazole glycerol phosphate synthase subunit HisF from Stenotrophomonas maltophilia (strain R551-3).